The primary structure comprises 254 residues: NH(3)-dependent NAD(+) synthetase (254 aa).

An ATP-binding site is contributed by 32 to 39; it reads GISGGVDS. A Mg(2+)-binding site is contributed by Asp-38. A deamido-NAD(+)-binding site is contributed by Arg-113. ATP is bound at residue Thr-133. Glu-138 provides a ligand contact to Mg(2+). Positions 146 and 153 each coordinate deamido-NAD(+). ATP contacts are provided by Lys-162 and Ser-184. 244 to 245 lines the deamido-NAD(+) pocket; it reads HK.

This sequence belongs to the NAD synthetase family. As to quaternary structure, homodimer.

The catalysed reaction is deamido-NAD(+) + NH4(+) + ATP = AMP + diphosphate + NAD(+) + H(+). The protein operates within cofactor biosynthesis; NAD(+) biosynthesis; NAD(+) from deamido-NAD(+) (ammonia route): step 1/1. Catalyzes the ATP-dependent amidation of deamido-NAD to form NAD. Uses ammonia as a nitrogen source. The sequence is that of NH(3)-dependent NAD(+) synthetase from Thermococcus sibiricus (strain DSM 12597 / MM 739).